We begin with the raw amino-acid sequence, 837 residues long: Katanin p80 WD40 repeat-containing subunit B1 homolog KTN80.4 (837 aa).

WD repeat units lie at residues 14–54 (AHSA…AILS), 57–96 (GHSSGIDSVTFDASEVLVAAGAASGTIKLWDLEEAKIVRT), 99–138 (GHRSNCISVDFHPFGEFFASGSLDTNLKIWDIRKKGCIHT), 141–182 (GHTR…TEFK), 184–222 (HEGQIQSLDFHPHEFLLATGSADRTVKFWDLETFELIGS), 225–265 (PETA…DGVD), and 267–304 (GWSRLSDMNVHEGKLLGCSYNQSCVGVWVVDLSRTEPC). The short motif at 115–131 (FFASGSLDTNLKIWDIR) is the DWD box element. Disordered stretches follow at residues 307-328 (GDTAQSNGHPEKRSCSGRDPVV), 358-462 (GRLS…ANPV), and 501-614 (LQAA…LVIN). Composition is skewed to polar residues over residues 376–387 (IGRSSTSQNSES) and 412–450 (TFSSTGSLPGTPHRVSSTNVSKATSGVSTAVSNAATSRR). A compositionally biased stretch (low complexity) spans 509 to 520 (SPSSRNNPDLPD). Composition is skewed to basic and acidic residues over residues 553 to 563 (ATERSINDFRY) and 580 to 595 (RNHDENYDLVSHRSNR).

It belongs to the WD repeat KATNB1 family. As to quaternary structure, component of KTN80-KTN1 complexes composed of a hexamer of KTN1-KTN80 heterodimers that sense microtubule (MT) geometry to confer precise MT severing. Interacts directly with AAA1/KTN1, and weakly with KTN80.1 and KTN80.3. Expressed in siliques, flowers, leaves, stems and roots.

The protein localises to the cytoplasm. It localises to the cytoskeleton. Functionally, may participate in a complex which severs microtubules in an ATP-dependent manner. This activity may promote rapid reorganization of cellular microtubule arrays. Confers precision to microtubule (MT) severing by specific targeting of KTN1 to MT cleavage sites such as crossover or branching nucleation sites. Together with other KTN80s, regulates cell elongation by modulating MT organization. This is Katanin p80 WD40 repeat-containing subunit B1 homolog KTN80.4 from Arabidopsis thaliana (Mouse-ear cress).